A 251-amino-acid polypeptide reads, in one-letter code: Hydroxyacylglutathione hydrolase (251 aa).

Positions 53, 55, 57, 58, 109, 126, and 164 each coordinate Zn(2+).

This sequence belongs to the metallo-beta-lactamase superfamily. Glyoxalase II family. In terms of assembly, monomer. Zn(2+) is required as a cofactor.

The catalysed reaction is an S-(2-hydroxyacyl)glutathione + H2O = a 2-hydroxy carboxylate + glutathione + H(+). It functions in the pathway secondary metabolite metabolism; methylglyoxal degradation; (R)-lactate from methylglyoxal: step 2/2. Functionally, thiolesterase that catalyzes the hydrolysis of S-D-lactoyl-glutathione to form glutathione and D-lactic acid. The sequence is that of Hydroxyacylglutathione hydrolase from Wigglesworthia glossinidia brevipalpis.